The sequence spans 98 residues: Protein PROLINE CONTENT ALTERNATIVE 22 (98 aa).

Mainly expressed in flowers, to a lower extent, in roots and, at very low levels, in leaves and stems.

It localises to the cytoplasm. Acts as an opponent to RZF1 during early seedling growth in term of proline accumulation in response to dehydration and abscisic acid (ABA). Confers sensitivity to abiotic stresses such as ABA, drought and osmotic stress (e.g. mannitol treatment) by preventing proline accumulation and by reducing the expression of dehydration-inducible genes. Promotes the production of lipid peroxidation by drought stress thus leading to malondialdehyde (MDA) synthesis. Prevents pollen tube elongation. Necessary for RZF1 expression in seedlings. The protein is Protein PROLINE CONTENT ALTERNATIVE 22 of Arabidopsis thaliana (Mouse-ear cress).